The following is a 320-amino-acid chain: Glutathione synthetase (320 aa).

Residues 127–312 (KLAITEFPRF…VAGLMIDALE (186 aa)) enclose the ATP-grasp domain. 153–209 (LAEHEDIILKPLDGMGGAGIFRIQNTDHNIGVIIETLTRYGTRTIMAQRFLPEIREG) contributes to the ATP binding site. Glu283 and Asn285 together coordinate Mg(2+).

This sequence belongs to the prokaryotic GSH synthase family. It depends on Mg(2+) as a cofactor. Mn(2+) serves as cofactor.

The enzyme catalyses gamma-L-glutamyl-L-cysteine + glycine + ATP = glutathione + ADP + phosphate + H(+). It participates in sulfur metabolism; glutathione biosynthesis; glutathione from L-cysteine and L-glutamate: step 2/2. This chain is Glutathione synthetase, found in Nitrosomonas europaea (strain ATCC 19718 / CIP 103999 / KCTC 2705 / NBRC 14298).